Reading from the N-terminus, the 122-residue chain is Prefoldin subunit 1 (122 aa).

Residue Ala-2 is modified to N-acetylalanine.

It belongs to the prefoldin subunit beta family. In terms of assembly, heterohexamer of two PFD-alpha type and four PFD-beta type subunits.

Its function is as follows. Binds specifically to cytosolic chaperonin (c-CPN) and transfers target proteins to it. Binds to nascent polypeptide chain and promotes folding in an environment in which there are many competing pathways for nonnative proteins. The protein is Prefoldin subunit 1 (PFDN1) of Bos taurus (Bovine).